The chain runs to 1470 residues: Gag-Pol polyprotein (1470 aa).

Gly-2 carries the N-myristoyl glycine; by host lipid modification. The Nuclear export signal motif lies at 16–22 (FEHIRLR). Positions 26–32 (KKKYQIK) match the Nuclear localization signal motif. Positions 117 to 144 (AVTPPGGQQKNNTGGTATPGGSQNFPAQ) are disordered. The span at 122–144 (GGQQKNNTGGTATPGGSQNFPAQ) shows a compositional bias: polar residues. 2 CCHC-type zinc fingers span residues 398–415 (PKCYNCGKFGHMQRQCPE) and 419–436 (IKCLKCGKPGHLAKDCRG). Residues 479–504 (KEAPAAVCRERETNEKSEQKPPSEQS) are disordered. The span at 486–504 (CRERETNEKSEQKPPSEQS) shows a compositional bias: basic and acidic residues. One can recognise a Peptidase A2 domain in the interval 531–602 (VKALLDTGAD…TPINIIGRNF (72 aa)). Catalysis depends on Asp-536, which acts as the For protease activity; shared with dimeric partner. Residues 658 to 848 (EGKLSRVGGD…PPFEWMGYKL (191 aa)) enclose the Reverse transcriptase domain. Residues Asp-724, Asp-799, and Asp-800 each contribute to the Mg(2+) site. Residues 841-849 (FEWMGYKLW) are RT 'primer grip'. A Tryptophan repeat motif motif is present at residues 1011 to 1027 (WEQWWADYWQVSWIPEW). An RNase H type-1 domain is found at 1047–1170 (IPGEDVYYVD…IDKLVSKGVR (124 aa)). Mg(2+) contacts are provided by Asp-1056, Glu-1091, Asp-1111, and Asp-1162. The Integrase-type zinc finger occupies 1176–1217 (GRIEEAQEEHDRYHSNWRNLADTFGLPQIVAKEIVAMCPKCQ). Zn(2+) contacts are provided by His-1185, His-1189, Cys-1213, and Cys-1216. Residues 1227–1377 (VDASPGVWQM…TAAERLINMI (151 aa)) enclose the Integrase catalytic domain. Mg(2+) is bound by residues Asp-1237 and Asp-1289. Residues 1396–1443 (FRVYYREGRDPVWKGPARLIWKGEGAVVLKEGEELKVVPRRKAKIIKD) constitute a DNA-binding region (integrase-type). Residues 1451-1470 (GDETHLEGAGGSDHQMAGDS) are disordered.

As to quaternary structure, homotrimer. Interacts with gp41 (via C-terminus). In terms of assembly, homodimer. The active site consists of two apposed aspartic acid residues. Heterodimer of p66 RT and p51 RT (RT p66/p51). Heterodimerization of RT is essential for DNA polymerase activity. Despite the sequence identities, p66 RT and p51 RT have distinct folding. As to quaternary structure, homotetramer; may further associate as a homohexadecamer. Mg(2+) is required as a cofactor. Post-translationally, specific enzymatic cleavages by the viral protease yield mature proteins. The protease is released by autocatalytic cleavage. The polyprotein is cleaved during and after budding, this process is termed maturation. Proteolytic cleavage of p66 RT removes the RNase H domain to yield the p51 RT subunit. Capsid protein p24 is phosphorylated.

It localises to the virion. It is found in the host nucleus. The protein resides in the host cytoplasm. Its subcellular location is the host cell membrane. It catalyses the reaction Specific for a P1 residue that is hydrophobic, and P1' variable, but often Pro.. It carries out the reaction Endohydrolysis of RNA in RNA/DNA hybrids. Three different cleavage modes: 1. sequence-specific internal cleavage of RNA. Human immunodeficiency virus type 1 and Moloney murine leukemia virus enzymes prefer to cleave the RNA strand one nucleotide away from the RNA-DNA junction. 2. RNA 5'-end directed cleavage 13-19 nucleotides from the RNA end. 3. DNA 3'-end directed cleavage 15-20 nucleotides away from the primer terminus.. The catalysed reaction is 3'-end directed exonucleolytic cleavage of viral RNA-DNA hybrid.. The enzyme catalyses DNA(n) + a 2'-deoxyribonucleoside 5'-triphosphate = DNA(n+1) + diphosphate. With respect to regulation, the viral protease is inhibited by many synthetic protease inhibitors (PIs), such as amprenavir, atazanavir, indinavir, loprinavir, nelfinavir, ritonavir and saquinavir. RT can be inhibited either by nucleoside RT inhibitors (NRTIs) or by non nucleoside RT inhibitors (NNRTIs). NRTIs act as chain terminators, whereas NNRTIs inhibit DNA polymerization by binding a small hydrophobic pocket near the RT active site and inducing an allosteric change in this region. Classical NRTIs are abacavir, adefovir (PMEA), didanosine (ddI), lamivudine (3TC), stavudine (d4T), tenofovir (PMPA), zalcitabine (ddC), and zidovudine (AZT). Classical NNRTIs are atevirdine (BHAP U-87201E), delavirdine, efavirenz (DMP-266), emivirine (I-EBU), and nevirapine (BI-RG-587). The tritherapies used as a basic effective treatment of AIDS associate two NRTIs and one NNRTI. Use of protease inhibitors in tritherapy regimens permit more ambitious therapeutic strategies. Functionally, gag-Pol polyprotein and Gag polyprotein may regulate their own translation, by the binding genomic RNA in the 5'-UTR. At low concentration, Gag-Pol and Gag would promote translation, whereas at high concentration, the polyproteins encapsidate genomic RNA and then shut off translation. In terms of biological role, matrix protein p17 has two main functions: in infected cell, it targets Gag and Gag-pol polyproteins to the plasma membrane via a multipartite membrane-binding signal, that includes its myristointegration complex. The myristoylation signal and the NLS exert conflicting influences its subcellular localization. The key regulation of these motifs might be phosphorylation of a portion of MA molecules on the C-terminal tyrosine at the time of virus maturation, by virion-associated cellular tyrosine kinase. Implicated in the release from host cell mediated by Vpu. Its function is as follows. Capsid protein p24 forms the conical core that encapsulates the genomic RNA-nucleocapsid complex in the virion. The core is constituted by capsid protein hexamer subunits. The core is disassembled soon after virion entry. Interaction with host PPIA/CYPA protects the virus from restriction by host TRIM5-alpha and from an unknown antiviral activity in host cells. This capsid restriction by TRIM5 is one of the factors which restricts SIV to the simian species. Nucleocapsid protein p7 encapsulates and protects viral dimeric unspliced (genomic) RNA. Binds these RNAs through its zinc fingers. Facilitates rearangement of nucleic acid secondary structure during retrotranscription of genomic RNA. This capability is referred to as nucleic acid chaperone activity. Functionally, the aspartyl protease mediates proteolytic cleavages of Gag and Gag-Pol polyproteins during or shortly after the release of the virion from the plasma membrane. Cleavages take place as an ordered, step-wise cascade to yield mature proteins. This process is called maturation. Displays maximal activity during the budding process just prior to particle release from the cell. Also cleaves Nef and Vif, probably concomitantly with viral structural proteins on maturation of virus particles. Hydrolyzes host EIF4GI and PABP1 in order to shut off the capped cellular mRNA translation. The resulting inhibition of cellular protein synthesis serves to ensure maximal viral gene expression and to evade host immune response. In terms of biological role, reverse transcriptase/ribonuclease H (RT) is a multifunctional enzyme that converts the viral dimeric RNA genome into dsDNA in the cytoplasm, shortly after virus entry into the cell. This enzyme displays a DNA polymerase activity that can copy either DNA or RNA templates, and a ribonuclease H (RNase H) activity that cleaves the RNA strand of RNA-DNA heteroduplexes in a partially processive 3' to 5' endonucleasic mode. Conversion of viral genomic RNA into dsDNA requires many steps. A tRNA binds to the primer-binding site (PBS) situated at the 5'-end of the viral RNA. RT uses the 3' end of the tRNA primer to perform a short round of RNA-dependent minus-strand DNA synthesis. The reading proceeds through the U5 region and ends after the repeated (R) region which is present at both ends of viral RNA. The portion of the RNA-DNA heteroduplex is digested by the RNase H, resulting in a ssDNA product attached to the tRNA primer. This ssDNA/tRNA hybridizes with the identical R region situated at the 3' end of viral RNA. This template exchange, known as minus-strand DNA strong stop transfer, can be either intra- or intermolecular. RT uses the 3' end of this newly synthesized short ssDNA to perform the RNA-dependent minus-strand DNA synthesis of the whole template. RNase H digests the RNA template except for two polypurine tracts (PPTs) situated at the 5'-end and near the center of the genome. It is not clear if both polymerase and RNase H activities are simultaneous. RNase H can probably proceed both in a polymerase-dependent (RNA cut into small fragments by the same RT performing DNA synthesis) and a polymerase-independent mode (cleavage of remaining RNA fragments by free RTs). Secondly, RT performs DNA-directed plus-strand DNA synthesis using the PPTs that have not been removed by RNase H as primers. PPTs and tRNA primers are then removed by RNase H. The 3' and 5' ssDNA PBS regions hybridize to form a circular dsDNA intermediate. Strand displacement synthesis by RT to the PBS and PPT ends produces a blunt ended, linear dsDNA copy of the viral genome that includes long terminal repeats (LTRs) at both ends. Its function is as follows. Integrase catalyzes viral DNA integration into the host chromosome, by performing a series of DNA cutting and joining reactions. This enzyme activity takes place after virion entry into a cell and reverse transcription of the RNA genome in dsDNA. The first step in the integration process is 3' processing. This step requires a complex comprising the viral genome, matrix protein, Vpr and integrase. This complex is called the pre-integration complex (PIC). The integrase protein removes 2 nucleotides from each 3' end of the viral DNA, leaving recessed CA OH's at the 3' ends. In the second step, the PIC enters cell nucleus. This process is mediated through integrase and Vpr proteins, and allows the virus to infect a non dividing cell. This ability to enter the nucleus is specific of lentiviruses, other retroviruses cannot and rely on cell division to access cell chromosomes. In the third step, termed strand transfer, the integrase protein joins the previously processed 3' ends to the 5' ends of strands of target cellular DNA at the site of integration. The 5'-ends are produced by integrase-catalyzed staggered cuts, 5 bp apart. A Y-shaped, gapped, recombination intermediate results, with the 5'-ends of the viral DNA strands and the 3' ends of target DNA strands remaining unjoined, flanking a gap of 5 bp. The last step is viral DNA integration into host chromosome. This involves host DNA repair synthesis in which the 5 bp gaps between the unjoined strands are filled in and then ligated. Since this process occurs at both cuts flanking the SIV genome, a 5 bp duplication of host DNA is produced at the ends of SIV integration. Alternatively, Integrase may catalyze the excision of viral DNA just after strand transfer, this is termed disintegration. This is Gag-Pol polyprotein (gag-pol) from Cercopithecidae (Old World monkeys).